The chain runs to 191 residues: TATA-box-binding protein (191 aa).

A run of 2 repeats spans residues 18–94 (LQNV…AKIV) and 108–185 (IQNI…YPVL).

Belongs to the TBP family. In terms of assembly, belongs to the TFIID complex together with the TBP-associated factors (TAFs). Binds DNA as monomer.

The protein localises to the nucleus. Its function is as follows. General transcription factor that functions at the core of the DNA-binding multiprotein factor TFIID. Binding of TFIID to the TATA box is the initial transcriptional step of the pre-initiation complex (PIC), playing a role in the activation of eukaryotic genes transcribed by RNA polymerase II. This chain is TATA-box-binding protein, found in Acetabularia peniculus (Green alga).